Reading from the N-terminus, the 217-residue chain is Ribosomal large subunit pseudouridine synthase E (217 aa).

Over residues 19-28 (HQVKRFSSQR) the composition is skewed to polar residues. The segment at 19 to 38 (HQVKRFSSQRSTRRKPENQP) is disordered. Catalysis depends on D79, which acts as the Nucleophile.

This sequence belongs to the pseudouridine synthase RsuA family.

It catalyses the reaction uridine(2457) in 23S rRNA = pseudouridine(2457) in 23S rRNA. Its function is as follows. Responsible for synthesis of pseudouridine from uracil-2457 in 23S ribosomal RNA. In Escherichia coli O157:H7, this protein is Ribosomal large subunit pseudouridine synthase E (rluE).